A 121-amino-acid polypeptide reads, in one-letter code: Basic phospholipase A2 homolog textilotoxin B chain (121 aa).

Cystine bridges form between cysteine 11–cysteine 72, cysteine 27–cysteine 120, cysteine 29–cysteine 45, cysteine 44–cysteine 101, cysteine 51–cysteine 94, cysteine 61–cysteine 87, and cysteine 80–cysteine 92.

Belongs to the phospholipase A2 family. Group I subfamily. N49 sub-subfamily. In terms of assembly, heterohexamer. 2 forms exist: 2 A or 2 B chains, 2 C chains and 2 covalently-linked D chains, and 1 A or 1 B, 1 C, 2 covalently-linked D chains and 2 differentially glycosylated covalently-linked D chains. Textilotoxin was originally described as pentameric. Expressed by the venom gland.

The protein resides in the secreted. Functionally, snake venom oligomeric phospholipase A2 that has potent presynaptic neurotoxicity. Chain B is not itself neurotoxic, but it is essential for the neurotoxicity of textilotoxin. Subunit B possesses a very low phospholipase activity. The chain is Basic phospholipase A2 homolog textilotoxin B chain from Pseudonaja textilis (Eastern brown snake).